A 56-amino-acid polypeptide reads, in one-letter code: Large ribosomal subunit protein eL37 (56 aa).

4 residues coordinate Zn(2+): cysteine 19, cysteine 22, cysteine 34, and cysteine 37. The C4-type zinc-finger motif lies at 19 to 37; that stretch reads CRRCGRLSYNFNRKTCVAC.

It belongs to the eukaryotic ribosomal protein eL37 family. The cofactor is Zn(2+).

Its function is as follows. Binds to the 23S rRNA. The protein is Large ribosomal subunit protein eL37 of Methanothrix thermoacetophila (strain DSM 6194 / JCM 14653 / NBRC 101360 / PT) (Methanosaeta thermophila).